Here is a 361-residue protein sequence, read N- to C-terminus: GDSL esterase/lipase At2g40250 (361 aa).

The first 28 residues, 1-28 (MNRNQHKPMFVTFLINILLLQLLNLTNA), serve as a signal peptide directing secretion. The active-site Nucleophile is the Ser43. Residues Asp337 and His340 contribute to the active site.

It belongs to the 'GDSL' lipolytic enzyme family.

The protein resides in the secreted. The protein is GDSL esterase/lipase At2g40250 of Arabidopsis thaliana (Mouse-ear cress).